The chain runs to 211 residues: Phosphatidylglycerophosphatase C (211 aa).

Topologically, residues 1–33 are cytoplasmic; the sequence is MATHERRVVFFDLDGTLHQQDMFGSFLRYLLRR. Residues 34 to 54 form a helical membrane-spanning segment; it reads QPLNALLVLPLLPIIAIALLI. Over 55–211 the chain is Periplasmic; it reads KGRAARWPMS…TPRGELQQLE (157 aa).

Mg(2+) is required as a cofactor.

Its subcellular location is the cell inner membrane. It carries out the reaction a 1,2-diacyl-sn-glycero-3-phospho-(1'-sn-glycero-3'-phosphate) + H2O = a 1,2-diacyl-sn-glycero-3-phospho-(1'-sn-glycerol) + phosphate. Its pathway is phospholipid metabolism; phosphatidylglycerol biosynthesis; phosphatidylglycerol from CDP-diacylglycerol: step 2/2. Its function is as follows. Lipid phosphatase which dephosphorylates phosphatidylglycerophosphate (PGP) to phosphatidylglycerol (PG). This is Phosphatidylglycerophosphatase C (pgpC) from Escherichia coli (strain K12).